The chain runs to 328 residues: Carbonic anhydrase-related protein 11 (328 aa).

Positions 1-23 are cleaved as a signal peptide; sequence MGAAPRLSAPRVLVLWAALGAAA. The Alpha-carbonic anhydrase domain maps to 33-303; sequence DWWSYKDNLQ…LAHRALRGNR (271 aa). A glycan (N-linked (GlcNAc...) asparagine) is linked at Asn-118. The segment at 300–328 is disordered; that stretch reads RGNRDPRHPERRCRGPNYRLHVDDVPHGL. A compositionally biased stretch (basic and acidic residues) spans 319–328; that stretch reads LHVDDVPHGL.

This sequence belongs to the alpha-carbonic anhydrase family.

It is found in the secreted. Does not have a catalytic activity. In Ovis aries (Sheep), this protein is Carbonic anhydrase-related protein 11 (CA11).